A 504-amino-acid chain; its full sequence is Probable GTP-binding protein OBGC2 (504 aa).

Over residues alanine 24–alanine 39 the composition is skewed to basic and acidic residues. 2 disordered regions span residues alanine 24–asparagine 46 and valine 93–lysine 122. An Obg domain is found at histidine 73–valine 276. The span at serine 107–lysine 122 shows a compositional bias: basic residues. The 218-residue stretch at alanine 277–arginine 494 folds into the OBG-type G domain. Residues glycine 283–serine 290 and aspartate 337–leucine 341 each bind GTP. The span at serine 436–glutamate 452 shows a compositional bias: polar residues. The tract at residues serine 436–arginine 463 is disordered. The span at threonine 453–arginine 463 shows a compositional bias: basic and acidic residues.

It belongs to the TRAFAC class OBG-HflX-like GTPase superfamily. OBG GTPase family.

In terms of biological role, may bind GTP and have GTPase activity. This chain is Probable GTP-binding protein OBGC2, found in Oryza sativa subsp. japonica (Rice).